The following is a 777-amino-acid chain: Disintegrin and metalloproteinase domain-containing protein 5 (777 aa).

Positions 1–16 (MFLVLVLLTGLGRLYA) are cleaved as a signal peptide. A propeptide spanning residues 17 to 142 (GNNPRKTFVQ…VLSGFTHMIY (126 aa)) is cleaved from the precursor. At 17–706 (GNNPRKTFVQ…RGYVVLSTKR (690 aa)) the chain is on the extracellular side. 2 N-linked (GlcNAc...) asparagine glycosylation sites follow: asparagine 49 and asparagine 123. A Peptidase M12B domain is found at 185–382 (RYIDMYIVVN…YGLTCLRNTS (198 aa)). 4 disulfides stabilise this stretch: cysteine 294–cysteine 377, cysteine 336–cysteine 361, cysteine 338–cysteine 343, and cysteine 456–cysteine 477. The 90-residue stretch at 396–485 (RRICGNSIRE…DCVHDTYAQN (90 aa)) folds into the Disintegrin domain. Residue asparagine 566 is glycosylated (N-linked (GlcNAc...) asparagine). In terms of domain architecture, EGF-like spans 633–667 (NNGSCNAEIHCQGRGICNNLDNCHCHKGFVPPECA). Cystine bridges form between cysteine 637/cysteine 649, cysteine 643/cysteine 655, and cysteine 657/cysteine 666. The chain crosses the membrane as a helical span at residues 707–727 (FQLIFYIGIPVIIIVAAILIK). Over 728–777 (QNQLGKLFCRGEKEHMSSVSEDGSRSVTLSATESKFPADTEHSNKEEDAQ) the chain is Cytoplasmic. The span at 744 to 760 (SSVSEDGSRSVTLSATE) shows a compositional bias: polar residues. Residues 744-777 (SSVSEDGSRSVTLSATESKFPADTEHSNKEEDAQ) are disordered. Basic and acidic residues predominate over residues 763-777 (FPADTEHSNKEEDAQ).

As to quaternary structure, interacts with TEX101. Post-translationally, subject to proteolytic processing during epididymal transit of spermatozoa. As to expression, detected in testis.

Its subcellular location is the membrane. Its function is as follows. This is a non catalytic metalloprotease-like protein. May play a role in sperm-egg fusion. This Cavia porcellus (Guinea pig) protein is Disintegrin and metalloproteinase domain-containing protein 5 (ADAM5).